Consider the following 370-residue polypeptide: Luciferin sulfotransferase (370 aa).

90-95 (KAGTTW) contacts 3'-phosphoadenylyl sulfate. H165 serves as the catalytic Proton acceptor. Residues R189, S197, Y250, 284–289 (LSFESM), and 316–320 (FMRSG) contribute to the 3'-phosphoadenylyl sulfate site.

It belongs to the sulfotransferase 1 family.

It catalyses the reaction firefly D-luciferin + 3'-phosphoadenylyl sulfate = firefly D-sulfoluciferin + adenosine 3',5'-bisphosphate + H(+). The catalysed reaction is firefly L-luciferin + 3'-phosphoadenylyl sulfate = firefly L-sulfoluciferin + adenosine 3',5'-bisphosphate + H(+). Sulfoluciferin formation is inhibited by the product adenosine 3',5'-bisphosphate. Its function is as follows. Catalyzes the production of firefly sulfoluciferin from luciferin using the sulfo-donor 3'-phosphoadenylyl sulfate (PAPS). Is also able to catalyze the reverse reaction, i.e. the adenosine 3',5'-bisphosphate-dependent desulfonation of sulfoluciferin. Can use either D- or L-luciferin stereoisomer as substrate. Sulfoluciferin, which is not a substrate of P.pyralis luciferase, likely serves as a luciferin storage form in fireflies. This chain is Luciferin sulfotransferase, found in Photinus pyralis (Common eastern firefly).